Reading from the N-terminus, the 276-residue chain is Sulfur carrier protein FdhD (276 aa).

The active-site Cysteine persulfide intermediate is the Cys122. 259-264 (FCRRGR) contacts Mo-bis(molybdopterin guanine dinucleotide).

The protein belongs to the FdhD family.

The protein localises to the cytoplasm. Functionally, required for formate dehydrogenase (FDH) activity. Acts as a sulfur carrier protein that transfers sulfur from IscS to the molybdenum cofactor prior to its insertion into FDH. In Proteus mirabilis (strain HI4320), this protein is Sulfur carrier protein FdhD.